Reading from the N-terminus, the 1894-residue chain is Plexin-A4 (1894 aa).

A signal peptide spans 1 to 23 (MKAMPWNWTCLLSHLLMVGMGSS). The Sema domain occupies 24-507 (TLLTRQPAPL…SERQLTRVPV (484 aa)). Topologically, residues 24 to 1237 (TLLTRQPAPL…IAPDSPLSLP (1214 aa)) are extracellular. 10 cysteine pairs are disulfide-bonded: C95-C104, C130-C138, C284-C405, C300-C356, C374-C393, C510-C527, C516-C558, C519-C536, C530-C542, and C593-C612. The region spanning 509 to 559 (SCGQYQSCGECLGSGDPHCGWCVLHNTCTRKERCERSKEPRRFASEMKQCV) is the PSI 1 domain. N655 carries an N-linked (GlcNAc...) asparagine glycan. PSI domains are found at residues 655–702 (NCSV…EDCP) and 803–856 (KCGA…SKCT). IPT/TIG domains lie at 858–952 (PRIT…YYFM), 954–1037 (LTLS…FQYV), 1040–1139 (PTIV…FTYY), and 1142–1230 (PVFE…YIAP). N1007, N1132, and N1180 each carry an N-linked (GlcNAc...) asparagine glycan. A helical membrane pass occupies residues 1238–1258 (AIVSIAVAGGLLIIFIVAVLI). Over 1259–1894 (AYKRKSRESD…QVITLMSLDS (636 aa)) the chain is Cytoplasmic. Position 1350 is an N6-acetyllysine (K1350).

This sequence belongs to the plexin family. As to quaternary structure, interacts with NRP1 and NRP2.

Its subcellular location is the cell membrane. Coreceptor for SEMA3A. Necessary for signaling by class 3 semaphorins and subsequent remodeling of the cytoskeleton. Plays a role in axon guidance in the developing nervous system. Class 3 semaphorins bind to a complex composed of a neuropilin and a plexin. The plexin modulates the affinity of the complex for specific semaphorins, and its cytoplasmic domain is required for the activation of down-stream signaling events in the cytoplasm. This chain is Plexin-A4 (PLXNA4), found in Homo sapiens (Human).